The sequence spans 444 residues: MKVVPSLLLSVLLAQVWLVPGLAPSPQSPETPAPQNQTSRVVQAPKEEEEDEQEASEEKASEEEKAWLMASRQQLAKETSNFGFSLLRKISMRHDGNMVFSPFGMSLAMTGLMLGATGPTETQIKRGLHLQALKPTKPGLLPSLFKGLRETLSRNLELGLTQGSFAFIHKDFDVKETFFNLSKRYFDTECVPMNFRNASQAKRLMNHYINKETRGKIPKLFDEINPETKLILVDYILFKGKWLTPFDPVFTEVDTFHLDKYKTIKVPMMYGAGKFASTFDKNFRCHVLKLPYQGNATMLVVLMEKMGDHLALEDYLTTDLVETWLRNMKTRNMEVFFPKFKLDQKYEMHELLRQMGIRRIFSPFADLSELSATGRNLQVSRVLQRTVIEVDERGTEAVAGILSEITAYSMPPVIKVDRPFHFMIYEETSGMLLFLGRVVNPTLL.

Residues 1–21 (MKVVPSLLLSVLLAQVWLVPG) form the signal peptide. The interval 24–65 (PSPQSPETPAPQNQTSRVVQAPKEEEEDEQEASEEKASEEEK) is disordered. Residue N36 is glycosylated (N-linked (GlcNAc...) asparagine). S56 bears the Phosphoserine; by FAM20C mark. Basic and acidic residues predominate over residues 56–65 (SEEKASEEEK). The interval 136–153 (TKPGLLPSLFKGLRETLS) is heparin-binding. N-linked (GlcNAc...) asparagine glycans are attached at residues N180, N197, and N295.

This sequence belongs to the serpin family. In terms of assembly, interacts with PROZ. Phosphorylated by FAM20C in the extracellular medium. As to expression, expressed by the liver and secreted in plasma.

The protein localises to the secreted. Its function is as follows. Inhibits activity of the coagulation protease factor Xa in the presence of PROZ, calcium and phospholipids. Also inhibits factor XIa in the absence of cofactors. This chain is Protein Z-dependent protease inhibitor (SERPINA10), found in Homo sapiens (Human).